The primary structure comprises 36 residues: GLKEWAMKKMCPIAVRLAKKCDGTLATKIKEICDNL.

An intrachain disulfide couples cysteine 11 to cysteine 33.

Belongs to the ectatomin family. Ectatomin-Et subfamily. As to quaternary structure, heterodimer of subunits A and B; disulfide-linked. In terms of tissue distribution, expressed by the venom gland.

The protein resides in the secreted. It localises to the target cell membrane. The polypeptide is U1-ectatotoxin-Et1b subunit B (Ectatomma tuberculatum (Selva ant)).